Consider the following 426-residue polypeptide: MFRTKRSALVRRLWRSRAPGGEDEEEGVGGGGGGGELRGEGATDGRAYGAGGGGAGRAGCCLGKAVRGAKGHHHPHPPTSGAGAAGGAEADLKALTHSVLKKLKERQLELLLQAVESRGGTRTACLLLPGRLDCRLGPGAPASAQPAQPPSSYSLPLLLCKVFRWPDLRHSSEVKRLCCCESYGKINPELVCCNPHHLSRLCELESPPPPYSRYPMDFLKPTAGCPDAVPSSAETGGTNYLAPGGLSDSQLLLEPGDRSHWCVVAYWEEKTRVGRLYCVQEPSLDIFYDLPQGNGFCLGQLNSDNKSQLVQKVRSKIGCGIQLTREVDGVWVYNRSSYPIFIKSATLDNPDSRTLLVHKVFPGFSIKAFDYEKAYSLQRPNDHEFMQQPWTGFTVQISFVKGWGQCYTRQFISSCPCWLEVIFNSR.

Positions 14 to 42 (WRSRAPGGEDEEEGVGGGGGGGELRGEGA) are disordered. An N6-acetyllysine; alternate mark is found at K64 and K70. Residues K64 and K70 each participate in a glycyl lysine isopeptide (Lys-Gly) (interchain with G-Cter in ubiquitin); alternate cross-link. The MH1 domain occupies 64-207 (KAVRGAKGHH…LSRLCELESP (144 aa)). Over residues 67 to 76 (RGAKGHHHPH) the composition is skewed to basic residues. The interval 67-87 (RGAKGHHHPHPPTSGAGAAGG) is disordered. Residues C125, C180, C192, and H197 each contribute to the Zn(2+) site. The PY-motif signature appears at 208-211 (PPPY). Residues 208–217 (PPPYSRYPMD) form an important for interaction with SMURF2 region. S249 is subject to Phosphoserine. Residues 261–426 (WCVVAYWEEK…CWLEVIFNSR (166 aa)) enclose the MH2 domain.

This sequence belongs to the dwarfin/SMAD family. As to quaternary structure, interacts with COPS5. Interacts with STAMBP. Interacts with PPP1R15A. Interacts with NEDD4L. Interacts with RNF111, AXIN1 and AXIN2. Interacts with ACVR1B, SMURF1, SMURF2 and TGFBR1; SMAD7 recruits SMURF1 and SMURF2 to the TGF-beta receptor and regulates its degradation. Interacts with WWP1. Interacts with PDPK1 (via PH domain). Ubiquitinated by WWP1. Interacts with TSC22D1/TSC-22; the interaction requires TGF-beta and the interaction is inhibited by TGFBR1. Post-translationally, phosphorylation on Ser-249 does not affect its stability, nuclear localization or inhibitory function in TGFB signaling; however it affects its ability to regulate transcription. Phosphorylated by PDPK1. In terms of processing, ubiquitinated by WWP1. Polyubiquitinated by RNF111, which is enhanced by AXIN1 and promotes proteasomal degradation. In response to TGF-beta, ubiquitinated by SMURF1; which promotes its degradation. Ubiquitinated by ARK2C, promoting proteasomal degradation, leading to enhance the BMP-Smad signaling. Acetylation prevents ubiquitination and degradation mediated by SMURF1. Ubiquitous in various organs, with higher levels in brain and kidney.

The protein resides in the nucleus. It localises to the cytoplasm. Its function is as follows. Antagonist of signaling by TGF-beta (transforming growth factor) type 1 receptor superfamily members; has been shown to inhibit TGF-beta (Transforming growth factor) and activin signaling by associating with their receptors thus preventing SMAD2 access. Functions as an adapter to recruit SMURF2 to the TGF-beta receptor complex. Also acts by recruiting the PPP1R15A-PP1 complex to TGFBR1, which promotes its dephosphorylation. Positively regulates PDPK1 kinase activity by stimulating its dissociation from the 14-3-3 protein YWHAQ which acts as a negative regulator. The polypeptide is Mothers against decapentaplegic homolog 7 (Smad7) (Mus musculus (Mouse)).